The chain runs to 137 residues: Protein apnoia (137 aa).

The next 3 helical transmembrane spans lie at 7–27 (IVFALVCLFLACDLVLGQQQA), 55–75 (LVPGAFVVGVITTLLAALTVV), and 76–96 (SIKGLGVGVILLVLAIGQMLS).

Interacts with crb.

It is found in the apical cell membrane. In terms of biological role, transmembrane protein that plays a key role in trachea development by regulating crb localization and maintenance at the apical cell membrane. Required for anisotropic apical surface expansion important for tracheal tube elongation and lumen stability at larval stages. This is Protein apnoia from Drosophila melanogaster (Fruit fly).